Consider the following 464-residue polypeptide: Soluble pyridine nucleotide transhydrogenase (464 aa).

Residue aspartate 35–cysteine 44 coordinates FAD.

The protein belongs to the class-I pyridine nucleotide-disulfide oxidoreductase family. It depends on FAD as a cofactor.

It is found in the cytoplasm. The catalysed reaction is NAD(+) + NADPH = NADH + NADP(+). Conversion of NADPH, generated by peripheral catabolic pathways, to NADH, which can enter the respiratory chain for energy generation. This is Soluble pyridine nucleotide transhydrogenase from Pseudomonas aeruginosa (strain LESB58).